A 179-amino-acid chain; its full sequence is Adenine phosphoribosyltransferase (179 aa).

It belongs to the purine/pyrimidine phosphoribosyltransferase family. Homodimer.

Its subcellular location is the cytoplasm. It carries out the reaction AMP + diphosphate = 5-phospho-alpha-D-ribose 1-diphosphate + adenine. Its pathway is purine metabolism; AMP biosynthesis via salvage pathway; AMP from adenine: step 1/1. Its function is as follows. Catalyzes a salvage reaction resulting in the formation of AMP, that is energically less costly than de novo synthesis. The chain is Adenine phosphoribosyltransferase from Dinoroseobacter shibae (strain DSM 16493 / NCIMB 14021 / DFL 12).